Here is a 516-residue protein sequence, read N- to C-terminus: (R)-citramalate synthase CimA (516 aa).

The region spanning 8 to 269 (LEILDVTLRD…KTNINEIAIT (262 aa)) is the Pyruvate carboxyltransferase domain. R16 serves as the catalytic Proton donor. Pyruvate-binding positions include 16–17 (RD) and Y144. Residue D17 coordinates Mn(2+). The active-site Proton acceptor is E146. Pyruvate is bound at residue T179. Residues H207 and H209 each contribute to the Mn(2+) site.

The protein belongs to the alpha-IPM synthase/homocitrate synthase family. In terms of assembly, homodimer. Mn(2+) serves as cofactor.

The catalysed reaction is pyruvate + acetyl-CoA + H2O = (3R)-citramalate + CoA + H(+). Its pathway is amino-acid biosynthesis; L-isoleucine biosynthesis; 2-oxobutanoate from pyruvate: step 1/3. Regulated by the end-product isoleucine via a feedback inhibition. The binding of isoleucine has inhibitory effects on the binding of both pyruvate and acetyl-CoA. May act via conformational change of the dimer interface of the regulatory domain, leading to inhibition of the catalytic reaction. Functionally, catalyzes the condensation of pyruvate and acetyl-coenzyme A to form (R)-citramalate. Shows strict substrate specificity for pyruvate. Cannot use alpha-ketoisovalerate, alpha-ketobutyrate, alpha-ketoisocaproate, alpha-ketoglutarate or glyoxylate. The protein is (R)-citramalate synthase CimA of Leptospira interrogans serogroup Icterohaemorrhagiae serovar Lai (strain 56601).